The primary structure comprises 247 residues: Ferredoxin:CoB-CoM heterodisulfide reductase subunit C (247 aa).

The 31-residue stretch at 32 to 62 folds into the 4Fe-4S ferredoxin-type domain; sequence TPESLGLDRCIQCGACTASCPAARFTDYSPR. Cysteine 41, cysteine 44, cysteine 47, cysteine 51, cysteine 84, cysteine 87, cysteine 90, and cysteine 94 together coordinate [4Fe-4S] cluster. Residues 216-240 show a composition bias toward basic and acidic residues; the sequence is RTGTSCTEKKKNSGDLGFESDREYT. The tract at residues 216-247 is disordered; it reads RTGTSCTEKKKNSGDLGFESDREYTGQEALTV.

This sequence belongs to the HdrC family. As to quaternary structure, the ferredoxin:CoB-CoM heterodisulfide reductase is composed of three subunits; HdrA1, HdrB1 and HdrC1. [4Fe-4S] cluster is required as a cofactor.

It localises to the cytoplasm. The enzyme catalyses coenzyme B + coenzyme M + 2 oxidized [2Fe-2S]-[ferredoxin] = coenzyme M-coenzyme B heterodisulfide + 2 reduced [2Fe-2S]-[ferredoxin] + 2 H(+). Its pathway is cofactor metabolism; coenzyme M-coenzyme B heterodisulfide reduction; coenzyme B and coenzyme M from coenzyme M-coenzyme B heterodisulfide: step 1/1. In terms of biological role, part of a complex that catalyzes the reversible reduction of CoM-S-S-CoB to the thiol-coenzymes H-S-CoM (coenzyme M) and H-S-CoB (coenzyme B). Probably involved in methylotrophic methanogenesis but not in aceticlastic methanogenesis. This Methanosarcina acetivorans (strain ATCC 35395 / DSM 2834 / JCM 12185 / C2A) protein is Ferredoxin:CoB-CoM heterodisulfide reductase subunit C.